The chain runs to 616 residues: Dihydroxy-acid dehydratase (616 aa).

D81 serves as a coordination point for Mg(2+). Position 122 (C122) interacts with [2Fe-2S] cluster. Positions 123 and 124 each coordinate Mg(2+). N6-carboxylysine is present on K124. C195 contacts [2Fe-2S] cluster. E491 provides a ligand contact to Mg(2+). S517 functions as the Proton acceptor in the catalytic mechanism.

It belongs to the IlvD/Edd family. Homodimer. It depends on [2Fe-2S] cluster as a cofactor. Mg(2+) is required as a cofactor.

It catalyses the reaction (2R)-2,3-dihydroxy-3-methylbutanoate = 3-methyl-2-oxobutanoate + H2O. It carries out the reaction (2R,3R)-2,3-dihydroxy-3-methylpentanoate = (S)-3-methyl-2-oxopentanoate + H2O. The protein operates within amino-acid biosynthesis; L-isoleucine biosynthesis; L-isoleucine from 2-oxobutanoate: step 3/4. Its pathway is amino-acid biosynthesis; L-valine biosynthesis; L-valine from pyruvate: step 3/4. Functions in the biosynthesis of branched-chain amino acids. Catalyzes the dehydration of (2R,3R)-2,3-dihydroxy-3-methylpentanoate (2,3-dihydroxy-3-methylvalerate) into 2-oxo-3-methylpentanoate (2-oxo-3-methylvalerate) and of (2R)-2,3-dihydroxy-3-methylbutanoate (2,3-dihydroxyisovalerate) into 2-oxo-3-methylbutanoate (2-oxoisovalerate), the penultimate precursor to L-isoleucine and L-valine, respectively. This is Dihydroxy-acid dehydratase from Escherichia coli O9:H4 (strain HS).